The following is a 134-amino-acid chain: MGDEAKIFTLSEVSEHNQAHDCWIVINGKVYNVTKFLEDHPGGDDVLLSSTGKDATDDFEDVGHSESAREMMEQYYVGEIDPTTIPKKVKYTPPKQPHYNQDKTSEFIIKLLQFLVPLAILGLAVGIRIYTKSG.

Residues Ala-5–Asp-81 form the Cytochrome b5 heme-binding domain. 2 residues coordinate heme: His-40 and His-64. Residues Phe-107–Ile-127 traverse the membrane as a helical segment.

It belongs to the cytochrome b5 family. Interacts with CER1, FAH1, FAH2 and BI-1.

The protein resides in the endoplasmic reticulum membrane. In terms of biological role, membrane bound hemoprotein which function as an electron carrier for several membrane bound oxygenases, including fatty acid desaturases. This is Cytochrome b5 isoform B from Arabidopsis thaliana (Mouse-ear cress).